Consider the following 280-residue polypeptide: Phosphatidylserine decarboxylase proenzyme (280 aa).

Catalysis depends on charge relay system; for autoendoproteolytic cleavage activity residues aspartate 90, histidine 146, and serine 247. Serine 247 serves as the catalytic Schiff-base intermediate with substrate; via pyruvic acid; for decarboxylase activity. The residue at position 247 (serine 247) is a Pyruvic acid (Ser); by autocatalysis.

This sequence belongs to the phosphatidylserine decarboxylase family. PSD-B subfamily. Prokaryotic type I sub-subfamily. In terms of assembly, heterodimer of a large membrane-associated beta subunit and a small pyruvoyl-containing alpha subunit. Pyruvate is required as a cofactor. Post-translationally, is synthesized initially as an inactive proenzyme. Formation of the active enzyme involves a self-maturation process in which the active site pyruvoyl group is generated from an internal serine residue via an autocatalytic post-translational modification. Two non-identical subunits are generated from the proenzyme in this reaction, and the pyruvate is formed at the N-terminus of the alpha chain, which is derived from the carboxyl end of the proenzyme. The autoendoproteolytic cleavage occurs by a canonical serine protease mechanism, in which the side chain hydroxyl group of the serine supplies its oxygen atom to form the C-terminus of the beta chain, while the remainder of the serine residue undergoes an oxidative deamination to produce ammonia and the pyruvoyl prosthetic group on the alpha chain. During this reaction, the Ser that is part of the protease active site of the proenzyme becomes the pyruvoyl prosthetic group, which constitutes an essential element of the active site of the mature decarboxylase.

Its subcellular location is the cell membrane. The catalysed reaction is a 1,2-diacyl-sn-glycero-3-phospho-L-serine + H(+) = a 1,2-diacyl-sn-glycero-3-phosphoethanolamine + CO2. It functions in the pathway phospholipid metabolism; phosphatidylethanolamine biosynthesis; phosphatidylethanolamine from CDP-diacylglycerol: step 2/2. Functionally, catalyzes the formation of phosphatidylethanolamine (PtdEtn) from phosphatidylserine (PtdSer). This chain is Phosphatidylserine decarboxylase proenzyme, found in Myxococcus xanthus (strain DK1622).